Consider the following 639-residue polypeptide: uncharacterized protein (639 aa).

Residues 1 to 16 (MLTLYLFTATCCFVCA) form the signal peptide. 2 disordered regions span residues 80–128 (RRRA…SDKL) and 432–488 (QTAT…TSRT). Composition is skewed to polar residues over residues 108 to 122 (TYAT…TASP) and 432 to 446 (QTAT…QQQP). The segment covering 465–480 (HGDEPHSDGELRRESH) has biased composition (basic and acidic residues).

This is an uncharacterized protein from Human cytomegalovirus (strain Merlin) (HHV-5).